The sequence spans 387 residues: Probable 1-alkyl-2-acetylglycerophosphocholine esterase (387 aa).

Residues Met1–Ala17 form the signal peptide. Residues Asn51 and Asn141 are each glycosylated (N-linked (GlcNAc...) asparagine). Ser227 serves as the catalytic Nucleophile. Asp250 (charge relay system) is an active-site residue. Asn283 carries an N-linked (GlcNAc...) asparagine glycan. His313 serves as the catalytic Charge relay system.

This sequence belongs to the AB hydrolase superfamily. Lipase family.

It localises to the secreted. It carries out the reaction a 1-O-alkyl-2-acetyl-sn-glycero-3-phosphocholine + H2O = a 1-O-alkyl-sn-glycero-3-phosphocholine + acetate + H(+). The chain is Probable 1-alkyl-2-acetylglycerophosphocholine esterase from Arthroderma benhamiae (strain ATCC MYA-4681 / CBS 112371) (Trichophyton mentagrophytes).